Reading from the N-terminus, the 66-residue chain is Sec-independent protein translocase protein TatA (66 aa).

The chain crosses the membrane as a helical span at residues 1–21 (MIGGLGMPELIIILVIILIIF). Residues 45–66 (RDAELNEGDKDDKEKEQEKLDK) form a disordered region.

This sequence belongs to the TatA/E family. The Tat system comprises two distinct complexes: a TatABC complex, containing multiple copies of TatA, TatB and TatC subunits, and a separate TatA complex, containing only TatA subunits. Substrates initially bind to the TatABC complex, which probably triggers association of the separate TatA complex to form the active translocon.

It is found in the cell inner membrane. Functionally, part of the twin-arginine translocation (Tat) system that transports large folded proteins containing a characteristic twin-arginine motif in their signal peptide across membranes. TatA could form the protein-conducting channel of the Tat system. The polypeptide is Sec-independent protein translocase protein TatA (Desulforapulum autotrophicum (strain ATCC 43914 / DSM 3382 / VKM B-1955 / HRM2) (Desulfobacterium autotrophicum)).